The primary structure comprises 337 residues: Diacylglycerol O-acyltransferase 2-like protein 6 (337 aa).

Transmembrane regions (helical) follow at residues 22–42 (MPVY…FLVF) and 102–122 (YIIA…NFAT).

Belongs to the diacylglycerol acyltransferase family.

The protein resides in the endoplasmic reticulum membrane. It catalyses the reaction 1,2-di-(9Z-octadecenoyl)-sn-glycerol + (9Z)-octadecenoyl-CoA = 1,2,3-tri-(9Z-octadecenoyl)-glycerol + CoA. Functionally, diglyceride acyltransferase that uses fatty acyl-CoA as substrate. Particularly active with oleate as a substrate. Has no wax synthase activity to produce wax esters. This is Diacylglycerol O-acyltransferase 2-like protein 6 (DGAT2L6) from Bos taurus (Bovine).